Here is a 610-residue protein sequence, read N- to C-terminus: Major facilitator superfamily multidrug transporter FLU1 (610 aa).

2 N-linked (GlcNAc...) asparagine glycosylation sites follow: Asn3 and Asn21. Over residues Gly47–Thr58 the composition is skewed to polar residues. Positions Gly47 to Lys74 are disordered. 11 helical membrane passes run Ile165 to Phe185, Leu209 to Gly229, Lys231 to Ala251, Phe262 to Met282, Ile292 to Phe312, Trp323 to Leu343, Ala408 to Glu428, Glu437 to Phe457, Leu478 to Thr498, Trp507 to Pro527, and Asn530 to Ile550. N-linked (GlcNAc...) asparagine glycosylation occurs at Asn568. The chain crosses the membrane as a helical span at residues Trp573–Tyr593.

Belongs to the major facilitator superfamily. DHA1 family. Polyamines/proton antiporter (TC 2.A.1.2.16) subfamily.

The protein localises to the cell membrane. Functionally, major facilitator superfamily transporter that mediates resistance to structurally and functionally unrelated compounds including cycloheximide but also azoles such as fuconazole, ketoconazole and itraconazole. Also mediates efflux of histatin 5, a salivary human antimicrobial peptide, and is responsible for reduction of its toxicity in C.albicans. The chain is Major facilitator superfamily multidrug transporter FLU1 from Candida albicans (strain SC5314 / ATCC MYA-2876) (Yeast).